The chain runs to 314 residues: Homoserine O-succinyltransferase (314 aa).

Catalysis depends on Cys142, which acts as the Acyl-thioester intermediate. Lys163 and Ser192 together coordinate substrate. The active-site Proton acceptor is the His235. Glu237 is an active-site residue. Arg249 lines the substrate pocket.

This sequence belongs to the MetA family.

It is found in the cytoplasm. It carries out the reaction L-homoserine + succinyl-CoA = O-succinyl-L-homoserine + CoA. Its pathway is amino-acid biosynthesis; L-methionine biosynthesis via de novo pathway; O-succinyl-L-homoserine from L-homoserine: step 1/1. In terms of biological role, transfers a succinyl group from succinyl-CoA to L-homoserine, forming succinyl-L-homoserine. The chain is Homoserine O-succinyltransferase from Shewanella pealeana (strain ATCC 700345 / ANG-SQ1).